The primary structure comprises 220 residues: Lactate utilization protein C (220 aa).

It belongs to the LutC/YkgG family.

Functionally, is involved in L-lactate degradation and allows cells to grow with lactate as the sole carbon source. The sequence is that of Lactate utilization protein C from Anoxybacillus flavithermus (strain DSM 21510 / WK1).